A 1114-amino-acid chain; its full sequence is Brother of CDO (1114 aa).

The signal sequence occupies residues 1-30 (MLRGTMTAWRGMRPEVTLACLLLATAGCFA). At 31–855 (DLNEVPQVTV…MVARSSDLPY (825 aa)) the chain is on the extracellular side. Ig-like C2-type domains follow at residues 36–123 (PQVT…ATVT), 129–213 (DFKL…VKTS), 235–315 (PEAQ…VILY), and 323–409 (PEVT…LRTS). Disulfide bonds link Cys57/Cys106, Cys150/Cys200, Cys252/Cys299, and Cys344/Cys391. N-linked (GlcNAc...) asparagine glycans are attached at residues Asn65, Asn76, Asn98, Asn189, and Asn275. The segment at 422-474 (ELATGTPPVSPSKLGNPEQMLRGQPALPRPPTSVGPASPQCPGEKGQGAPAEA) is disordered. Fibronectin type-III domains lie at 474–571 (APII…GRRP), 608–703 (APDR…VVSG), and 712–812 (PVAG…TKAR). N-linked (GlcNAc...) asparagine glycosylation is present at Asn517. A disordered region spans residues 577 to 615 (ASKEQQIQRDDPGASPQSSSQPDHGRLSPPEAPDRPTIS). N-linked (GlcNAc...) asparagine glycans are attached at residues Asn725 and Asn759. Residues 812-833 (RKSSGQPGRLPPPTLAPPQPPL) are disordered. Positions 820–833 (RLPPPTLAPPQPPL) are enriched in pro residues. Residues 856–876 (LIVGVVLGSIVLIIVTFIPFC) form a helical membrane-spanning segment. The Cytoplasmic segment spans residues 877-1114 (LWRAWSKQKH…VSFETPPLTI (238 aa)). Over residues 972–986 (QTHLGNGYDPQSHQI) the composition is skewed to polar residues. The segment at 972–998 (QTHLGNGYDPQSHQITRGPKSSPDEGS) is disordered.

As to quaternary structure, part of a complex that contains BOC, CDON, NEO1, cadherins and CTNNB1. Interacts with NTN3. Interacts with SHH, DHH and IHH. Interacts with CDH2 and CTNNB1. Interacts with CDH15 only during the early stages of myoblast differentiation. N-glycosylated. As to expression, detected in skeletal muscle, heart, thymus, kidney and small intestine. Detected at lower levels in brain, placenta, lung and colon mucosa.

Its subcellular location is the cell membrane. Component of a cell-surface receptor complex that mediates cell-cell interactions between muscle precursor cells. Promotes differentiation of myogenic cells. This chain is Brother of CDO (BOC), found in Homo sapiens (Human).